Reading from the N-terminus, the 170-residue chain is Transcription factor E (170 aa).

Residues 1 to 93 (MKDAYLYVVE…AWYVDDEIIR (93 aa)) enclose the HTH TFE/IIEalpha-type domain.

It belongs to the TFE family. Monomer. Interaction with RNA polymerase subunits RpoF and RpoE is necessary for Tfe stimulatory transcription activity. Able to interact with Tbp and RNA polymerase in the absence of DNA promoter. Interacts both with the preinitiation and elongation complexes.

Transcription factor that plays a role in the activation of archaeal genes transcribed by RNA polymerase. Facilitates transcription initiation by enhancing TATA-box recognition by TATA-box-binding protein (Tbp), and transcription factor B (Tfb) and RNA polymerase recruitment. Not absolutely required for transcription in vitro, but particularly important in cases where Tbp or Tfb function is not optimal. It dynamically alters the nucleic acid-binding properties of RNA polymerases by stabilizing the initiation complex and destabilizing elongation complexes. Seems to translocate with the RNA polymerase following initiation and acts by binding to the non template strand of the transcription bubble in elongation complexes. The protein is Transcription factor E of Pyrobaculum arsenaticum (strain DSM 13514 / JCM 11321 / PZ6).